A 182-amino-acid polypeptide reads, in one-letter code: Cytidylate kinase (182 aa).

Position 7-15 (7-15) interacts with ATP; sequence GLPGSGTTS.

Belongs to the cytidylate kinase family. Type 2 subfamily.

It localises to the cytoplasm. The catalysed reaction is CMP + ATP = CDP + ADP. It catalyses the reaction dCMP + ATP = dCDP + ADP. This chain is Cytidylate kinase, found in Methanoregula boonei (strain DSM 21154 / JCM 14090 / 6A8).